Reading from the N-terminus, the 74-residue chain is Large ribosomal subunit protein uL29 (74 aa).

This sequence belongs to the universal ribosomal protein uL29 family.

The polypeptide is Large ribosomal subunit protein uL29 (Nostoc sp. (strain PCC 7120 / SAG 25.82 / UTEX 2576)).